Consider the following 288-residue polypeptide: MINGTVRIRLDLAYDGTDFHGWARQGDSDLRTVQKIIEDTLTLVLQRPIDLTVAGRTDAGVHATGQVAHFDVDPAALETRSIAGDPARLIRRLARLMPDDVRIHNMSFVPAEFDARFSALRRHYVYRVTTHPRGALPTRARDTAHWPRSVDISAMQAAADALIGMHDFAAFCKYREGASTIRDLQEFTWHDVSTPQEPQLYEAHVTADAFCWSMVRSLVGACLVVGEGKRADGFTEHLLGETKRSSSIPVAAACGLSLVGVDYPSDDQLGARAEQARAYRTHDELPSL.

Catalysis depends on D58, which acts as the Nucleophile. Y124 provides a ligand contact to substrate.

This sequence belongs to the tRNA pseudouridine synthase TruA family. As to quaternary structure, homodimer.

The enzyme catalyses uridine(38/39/40) in tRNA = pseudouridine(38/39/40) in tRNA. Formation of pseudouridine at positions 38, 39 and 40 in the anticodon stem and loop of transfer RNAs. The sequence is that of tRNA pseudouridine synthase A from Corynebacterium diphtheriae (strain ATCC 700971 / NCTC 13129 / Biotype gravis).